The chain runs to 189 residues: dCTP deaminase (189 aa).

Residues 112 to 117 (KSTYAR), 136 to 138 (TLE), Q157, Y171, and Q181 each bind dCTP. E138 (proton donor/acceptor) is an active-site residue.

It belongs to the dCTP deaminase family. As to quaternary structure, homotrimer.

The catalysed reaction is dCTP + H2O + H(+) = dUTP + NH4(+). It functions in the pathway pyrimidine metabolism; dUMP biosynthesis; dUMP from dCTP (dUTP route): step 1/2. Its function is as follows. Catalyzes the deamination of dCTP to dUTP. This Xanthomonas euvesicatoria pv. vesicatoria (strain 85-10) (Xanthomonas campestris pv. vesicatoria) protein is dCTP deaminase.